The chain runs to 598 residues: NADH-quinone oxidoreductase subunit C/D (598 aa).

An NADH dehydrogenase I subunit C region spans residues 1-189 (MTDQIAQNSA…DPYVLTKQKE (189 aa)). An NADH dehydrogenase I subunit D region spans residues 213 to 598 (DFMFLNLGPN…IDFVMSDVDR (386 aa)).

It in the N-terminal section; belongs to the complex I 30 kDa subunit family. In the C-terminal section; belongs to the complex I 49 kDa subunit family. As to quaternary structure, NDH-1 is composed of 13 different subunits. Subunits NuoB, CD, E, F, and G constitute the peripheral sector of the complex.

It localises to the cell inner membrane. It carries out the reaction a quinone + NADH + 5 H(+)(in) = a quinol + NAD(+) + 4 H(+)(out). Functionally, NDH-1 shuttles electrons from NADH, via FMN and iron-sulfur (Fe-S) centers, to quinones in the respiratory chain. The immediate electron acceptor for the enzyme in this species is believed to be ubiquinone. Couples the redox reaction to proton translocation (for every two electrons transferred, four hydrogen ions are translocated across the cytoplasmic membrane), and thus conserves the redox energy in a proton gradient. In Proteus mirabilis (strain HI4320), this protein is NADH-quinone oxidoreductase subunit C/D.